The chain runs to 436 residues: Phosphomethylpyrimidine synthase (436 aa).

Substrate contacts are provided by residues N68, M97, Y126, H166, 188-190 (SRG), 229-232 (DGFR), and E268. H272 serves as a coordination point for Zn(2+). Y295 is a binding site for substrate. H336 lines the Zn(2+) pocket. Positions 412, 415, and 419 each coordinate [4Fe-4S] cluster.

This sequence belongs to the ThiC family. In terms of assembly, homodimer. [4Fe-4S] cluster is required as a cofactor.

It carries out the reaction 5-amino-1-(5-phospho-beta-D-ribosyl)imidazole + S-adenosyl-L-methionine = 4-amino-2-methyl-5-(phosphooxymethyl)pyrimidine + CO + 5'-deoxyadenosine + formate + L-methionine + 3 H(+). The protein operates within cofactor biosynthesis; thiamine diphosphate biosynthesis. Functionally, catalyzes the synthesis of the hydroxymethylpyrimidine phosphate (HMP-P) moiety of thiamine from aminoimidazole ribotide (AIR) in a radical S-adenosyl-L-methionine (SAM)-dependent reaction. In Geobacter metallireducens (strain ATCC 53774 / DSM 7210 / GS-15), this protein is Phosphomethylpyrimidine synthase.